A 229-amino-acid polypeptide reads, in one-letter code: Peroxiredoxin-like 2A (229 aa).

Residues 14–112 (MWSIGAGALG…DQLGVPLYAV (99 aa)) are thioredoxin fold. Active-site redox-active residues include Cys85 and Cys88.

It belongs to the peroxiredoxin-like PRXL2 family. PRXL2A subfamily. Expressed in CSF1 and TNFSF11-stimulated CD14(+) peripheral blood mononuclear cells (PBMCs).

The protein localises to the cytoplasm. It localises to the secreted. Functionally, involved in redox regulation of the cell. Acts as an antioxidant. Inhibits TNFSF11-induced NFKB1 and JUN activation and osteoclast differentiation. May affect bone resorption and help to maintain bone mass. Acts as a negative regulator of macrophage-mediated inflammation by inhibiting macrophage production of inflammatory cytokines, probably through suppression of the MAPK signaling pathway. The chain is Peroxiredoxin-like 2A from Homo sapiens (Human).